A 356-amino-acid polypeptide reads, in one-letter code: Mitogen-activated protein kinase PMK11 (356 aa).

In terms of domain architecture, Protein kinase spans 24–312 (YDIQDVVGEG…VEEALKHPYL (289 aa)). ATP contacts are provided by residues 30–38 (VGEGAYGVV) and Lys53.

Belongs to the protein kinase superfamily. CMGC Ser/Thr protein kinase family. MAP kinase subfamily. Mg(2+) serves as cofactor. Phosphorylated by MST7.

The catalysed reaction is L-seryl-[protein] + ATP = O-phospho-L-seryl-[protein] + ADP + H(+). The enzyme catalyses L-threonyl-[protein] + ATP = O-phospho-L-threonyl-[protein] + ADP + H(+). Mitogen-activated protein kinase; part of the MST11-MST7-PMK1 MAP kinase (MAPK) cascade that is essential for appressorium formation, penetration and invasive growth. Central regulator of appressorium development that acts downstream of the cAMP signal. The MST11-MST7-PMK1 MAP kinase cascade transduces signals from the cell surface sensors MDB2 and SHO1 that recognize various surface signals such as surface hydrophobicity, cutin monomers, and rice leaf waxes. Regulates expression of secreted fungal effector proteins implicated of host immune defenses, preventing reactive oxygen species generation and excessive callose deposition at plasmodesmata. Furthermore, controls the hyphal constriction required for fungal growth from one rice cell to the neighboring cell, enabling host tissue colonization and blast disease. Targets downstream of the PMK1-MAPK pathway include transcription factor MST12 and pathogenicity-related genes GAS1 and GAS2, both of which are expressed during appressorium formation, even if regulation of MST12 is not associated with expression of GAS1 or GAS2. The protein is Mitogen-activated protein kinase PMK11 of Pyricularia oryzae (strain 70-15 / ATCC MYA-4617 / FGSC 8958) (Rice blast fungus).